Here is a 338-residue protein sequence, read N- to C-terminus: MEYSSVFDVAIVGAGPVGLFTVFQAGMLGMNSCVIDALDIVGGQCAVLYPEKPIYDIPGYPMITAQDLVNNLKKQAEPFAPVYIMGQFVESISEGPDCFVLQTNKGTSVKCRAIIVAAGSGGFGPNRPPLDGIMEYENKSVFYNVSQMATFKNKKVVIAGGGDSAADWAVNLAEVADKLYVIHRRKSFRCAPNTLKKLEELADEGRINVLIPYQLAGLDGENGELRSVVVRNITTKEEIPIGADFLLPFFGISANLGEIVNWGLGVEGFQIPVEQSTCRTRRSKIYAVGDIAAYPGKIKLILVGFSEAALACQDIRAVLFPDTPLNFQYSTSKGIPTL.

FAD-binding residues include Asp36, Gln44, Tyr49, Val89, Phe123, Asp290, and Thr331.

The protein belongs to the ferredoxin--NADP reductase type 2 family. As to quaternary structure, homodimer. FAD is required as a cofactor.

It carries out the reaction 2 reduced [2Fe-2S]-[ferredoxin] + NADP(+) + H(+) = 2 oxidized [2Fe-2S]-[ferredoxin] + NADPH. The polypeptide is Ferredoxin--NADP reductase (Anaplasma phagocytophilum (strain HZ)).